The sequence spans 167 residues: Lipoprotein signal peptidase (167 aa).

A run of 3 helical transmembrane segments spans residues 10–30 (LIWLLLSAVVIGLDQWSKAWV), 68–88 (WQLWFFTALAVGISGLLAFWL), and 98–118 (SAVPYALVIGGAIGNVIDRLM). Residues D124 and D142 contribute to the active site. The helical transmembrane segment at 138–158 (FNIADSAIVGGAIGIALFGLF) threads the bilayer.

Belongs to the peptidase A8 family.

It localises to the cell inner membrane. The enzyme catalyses Release of signal peptides from bacterial membrane prolipoproteins. Hydrolyzes -Xaa-Yaa-Zaa-|-(S,diacylglyceryl)Cys-, in which Xaa is hydrophobic (preferably Leu), and Yaa (Ala or Ser) and Zaa (Gly or Ala) have small, neutral side chains.. It participates in protein modification; lipoprotein biosynthesis (signal peptide cleavage). In terms of biological role, this protein specifically catalyzes the removal of signal peptides from prolipoproteins. The polypeptide is Lipoprotein signal peptidase (Xanthomonas campestris pv. campestris (strain 8004)).